The chain runs to 277 residues: Probable endonuclease 4 (277 aa).

His67, His107, Glu142, Asp176, His179, His211, Asp224, His226, and Glu256 together coordinate Zn(2+).

This sequence belongs to the AP endonuclease 2 family. Requires Zn(2+) as cofactor.

The enzyme catalyses Endonucleolytic cleavage to 5'-phosphooligonucleotide end-products.. Its function is as follows. Endonuclease IV plays a role in DNA repair. It cleaves phosphodiester bonds at apurinic or apyrimidinic (AP) sites, generating a 3'-hydroxyl group and a 5'-terminal sugar phosphate. In Clostridium beijerinckii (strain ATCC 51743 / NCIMB 8052) (Clostridium acetobutylicum), this protein is Probable endonuclease 4.